The chain runs to 568 residues: Protein NDNF (568 aa).

The signal sequence occupies residues 1 to 19 (MELFYWCLLCLLLPLTSRT). Fibronectin type-III domains follow at residues 261–331 (NLGK…VGAF) and 445–564 (PSLP…IVKT). Asn322 and Asn488 each carry an N-linked (GlcNAc...) asparagine glycan.

Binds heparin and chondroitin sulfate. Post-translationally, O-glycosylated; contains heparan sulfate and chondroitin sulfate. In terms of processing, N-glycosylated. Expressed in brain and spinal cord with no expression detected in heart, kidney or liver. Expressed by neurons but not by astrocytes. In the brain, detected in the cerebrum, cerebellum and olfactory bulbs. In the cerebral cortex, highly expressed in Cajal-Retzius cells. Also expressed in hippocampal neurons and in Purkinje and granule cells of the cerebellum (at protein level). Expressed in neurons along the GnRH migratory route.

The protein localises to the secreted. Functionally, secretory protein that plays a role in various cellular processes. Acts as a chemorepellent acting on gonadotropin-releasing hormone (GnRH) expressing neurons regulating their migration to the hypothalamus. Also promotes neuron migration, growth and survival as well as neurite outgrowth and is involved in the development of the olfactory system. May also act through the regulation of growth factors activity and downstream signaling. Also regulates extracellular matrix assembly and cell adhesiveness. Promotes endothelial cell survival, vessel formation and plays an important role in the process of revascularization through NOS3-dependent mechanisms. This Mus musculus (Mouse) protein is Protein NDNF (Ndnf).